Reading from the N-terminus, the 102-residue chain is Small ribosomal subunit protein eS24 (102 aa).

The protein belongs to the eukaryotic ribosomal protein eS24 family.

The sequence is that of Small ribosomal subunit protein eS24 from Methanococcus maripaludis (strain DSM 14266 / JCM 13030 / NBRC 101832 / S2 / LL).